Here is a 436-residue protein sequence, read N- to C-terminus: Antilisterial bacteriocin subtilosin biosynthesis protein AlbD (436 aa).

10 consecutive transmembrane segments (helical) span residues 27-47, 51-71, 112-132, 134-154, 166-186, 187-207, 240-260, 270-290, 315-335, and 395-415; these read IAAG…QAGI, VLGK…MVFL, TLFF…SGAQ, LFWL…GVML, FLLH…MPAV, TIPL…PVFL, AMLL…FQMM, IYIV…LYSI, FYSG…GFIS, and ATLA…LIIV.

The protein localises to the cell membrane. Involved in the production of the bacteriocin subtilosin. Required for immunity to subtilosin. The chain is Antilisterial bacteriocin subtilosin biosynthesis protein AlbD (albD) from Bacillus subtilis.